The primary structure comprises 145 residues: EDVPQPPVSQFYIQGQVYCDTCRARFITELSEFIPGAGVRLQCKDGENGKVTFTEVGYTKAEGLYNMLIERDHKNEFCEITLISSSRKDCDEIPTEGWVKPSLKFVLNTVNGTTRTINPLGFLKKEVLPKCPQVFNKLGMYPPNM.

Intrachain disulfides connect Cys-19–Cys-90, Cys-22–Cys-131, and Cys-43–Cys-78. An N-linked (GlcNAc...) asparagine glycan is attached at Asn-111.

Belongs to the Ole e I family.

The protein localises to the secreted. In Ligustrum vulgare (Common privet), this protein is Major pollen allergen Lig v 1.